Here is a 429-residue protein sequence, read N- to C-terminus: Cell wall protein ECM33 (429 aa).

The signal sequence occupies residues 1 to 19 (MQFKNALTATAILSASALA). 12 N-linked (GlcNAc...) asparagine glycosylation sites follow: N21, N56, N82, N196, N209, N227, N234, N241, N267, N279, N304, and N328. S339 carries the phosphoserine modification. Residues 361–401 (LSSTSTESSKSSATSSASSSGDASNAQANVSASASSSSSSS) show a composition bias toward low complexity. The interval 361 to 410 (LSSTSTESSKSSATSSASSSGDASNAQANVSASASSSSSSSKKSKGAAPE) is disordered. Residue N389 is glycosylated (N-linked (GlcNAc...) asparagine). Residue G406 is the site of GPI-anchor amidated glycine attachment. A propeptide spans 407 to 429 (AAPELVPATSFMGVVAAVGVALL) (removed in mature form).

Belongs to the SPS2 family. The GPI-anchor is attached to the protein in the endoplasmic reticulum and serves to target the protein to the cell surface. There, the glucosamine-inositol phospholipid moiety is cleaved off and the GPI-modified mannoprotein is covalently attached via its lipidless GPI glycan remnant to the 1,6-beta-glucan of the outer cell wall layer. Post-translationally, extensively N-glycosylated.

It is found in the cell membrane. The protein localises to the secreted. Its subcellular location is the cell wall. Required for proper cell wall integrity and for the correct assembly of the mannoprotein outer layer of the cell wall. Important for apical bud growth. The polypeptide is Cell wall protein ECM33 (ECM33) (Saccharomyces cerevisiae (strain ATCC 204508 / S288c) (Baker's yeast)).